We begin with the raw amino-acid sequence, 257 residues long: Thioesterase frbE (257 aa).

This sequence belongs to the AMT4 thioesterase family.

Its pathway is antifungal biosynthesis. In terms of biological role, thioesterase; part of the gene cluster that mediates the biosynthesis of the antifungal antibiotic FR901469, an inhibitor of beta-1,3-glucansynthase, exerting antifungal activity against the pathogenes Candida albicans and Aspergillus fumigatus. FR901469 is a cyclic depsipeptide containing 12 amino acid residues and a fatty acid chain. The NRPS frbI contains 12 modules responsible for the formation of the depsipeptide backbone which is denoted as Acyl-Thr-Ala-Tyr-Val-4OHPro-Thr-Thr-3OHPro-threo3OHGln-Gly-Thr-Orn-OH (C71H116N14O23). The PKS frbB is probably involved in the production of the hydrocarbon chain, and the acyl-CoA ligase frbC might be involved in the transport of the chain to the peptide ptoduct of frbI. Because FR901469 contains 3 hydroxylated amino acid residues, the 3 oxygenases frbA, frbH, and frbJ might be participating in amino acid hydroxylation. As no thioesterase domains were detected in frbI or frbB, the thioesterases frbD and frbE may instead release and cyclize the products of the NRPS and PKS, respectively. In Dothideomycetidae sp. (strain 11243) (Fungal sp. (strain No.11243)), this protein is Thioesterase frbE.